A 577-amino-acid chain; its full sequence is Arginine--tRNA ligase (577 aa).

The 'HIGH' region motif lies at 122–132 (PNVAKEMHVGH).

The protein belongs to the class-I aminoacyl-tRNA synthetase family. In terms of assembly, monomer.

It localises to the cytoplasm. It carries out the reaction tRNA(Arg) + L-arginine + ATP = L-arginyl-tRNA(Arg) + AMP + diphosphate. This is Arginine--tRNA ligase from Escherichia coli O7:K1 (strain IAI39 / ExPEC).